The following is a 201-amino-acid chain: Large ribosomal subunit protein uL4 (201 aa).

Residues 45–73 (AQKTRAEVTGSGKKPWRQKGTGRARAGSV) form a disordered region.

This sequence belongs to the universal ribosomal protein uL4 family. Part of the 50S ribosomal subunit.

One of the primary rRNA binding proteins, this protein initially binds near the 5'-end of the 23S rRNA. It is important during the early stages of 50S assembly. It makes multiple contacts with different domains of the 23S rRNA in the assembled 50S subunit and ribosome. In terms of biological role, forms part of the polypeptide exit tunnel. In Yersinia pseudotuberculosis serotype O:1b (strain IP 31758), this protein is Large ribosomal subunit protein uL4.